The primary structure comprises 403 residues: MRLSRLLIGASLGVALSSTAFTAALADVKFGSLYPISGSLALLGEESARGLELAVDEVNAAGGIKGEKVVLERGDAVDNNQATGEARRLISLVGVKAIFGTYSSARVIAASQVSELAGIPYFEMGAVADEVTGRGLQYLFRTNPTAENMAKDSVDMLIKGIAPGLGKDPKDMKIGIIYEDSSYGTSVAGHQEDNAKAAGLTVVLKSGYPSNTVDMSSLVLELREKGADVVMQTSYQNDSVLFLQQANEAGYKPLAIIGGGGGYSMQPTADAVGHDLIDGVFDADYTQYAVNTSATPGLTEFVEAYKAKYGSQPRSGHSLTNYVGAKAIFQALNAGEGFEPDQIVSAVKALDIPDGQTAAGYGVKFGKNNQNERATMMGMQWQDGKLVTVYPENAAIAKMRFKK.

The N-terminal stretch at 1–26 is a signal peptide; the sequence is MRLSRLLIGASLGVALSSTAFTAALA.

Belongs to the leucine-binding protein family.

Component of an amino-acid transport system. In Brucella suis biovar 1 (strain 1330), this protein is Leu/Ile/Val-binding protein homolog 8.